We begin with the raw amino-acid sequence, 281 residues long: sn-glycerol-3-phosphate transport system permease protein UgpE (281 aa).

6 helical membrane passes run 16–36 (LILG…AATL), 85–105 (FSIT…IVWF), 113–133 (FFWM…FPTV), 142–162 (LDSY…TFLF), 202–222 (ALFV…LLII), and 247–267 (WNSV…IVLV). The ABC transmembrane type-1 domain occupies 77-268 (LLNSFVMAFS…IPPVVIVLVM (192 aa)).

Belongs to the binding-protein-dependent transport system permease family. UgpAE subfamily. The complex is composed of two ATP-binding proteins (UgpC), two transmembrane proteins (UgpA and UgpE) and a solute-binding protein (UgpB).

It localises to the cell inner membrane. Part of the ABC transporter complex UgpBAEC involved in sn-glycerol-3-phosphate (G3P) import. Probably responsible for the translocation of the substrate across the membrane. The polypeptide is sn-glycerol-3-phosphate transport system permease protein UgpE (ugpE) (Shigella flexneri serotype 5b (strain 8401)).